Consider the following 1118-residue polypeptide: cGMP-specific 3',5'-cyclic phosphodiesterase (1118 aa).

Residues 1–142 (MTDVSSPAGG…KASTTASQQD (142 aa)) form a disordered region. Residues 18–33 (STTSSSSAATTSASSS) show a composition bias toward low complexity. A compositionally biased stretch (polar residues) spans 34-45 (KPLTNGANKTAI). 2 stretches are compositionally biased toward low complexity: residues 46 to 56 (STAAGGVTPGA) and 63 to 72 (GAIPASSSSG). Polar residues predominate over residues 84-101 (SNNNRPAVTNRSSETKLM). A compositionally biased stretch (low complexity) spans 102-128 (TPTGSSSSPSQSPSQTQASIQTQTSQQ). GAF domains follow at residues 247–399 (DIDV…GIGI) and 431–612 (NLEC…GLGI). The 324-residue stretch at 642 to 965 (SQDQTEKLTQ…RNWQDLAEKV (324 aa)) folds into the PDEase domain. His-718 serves as the catalytic Proton donor. A divalent metal cation contacts are provided by His-722, His-758, Asp-759, and Asp-869. Disordered stretches follow at residues 1006 to 1035 (QQSQ…TGAL) and 1065 to 1118 (SHVS…CALL). 2 stretches are compositionally biased toward basic and acidic residues: residues 1011 to 1022 (GSEDSHTPEHQR) and 1065 to 1075 (SHVSEDMDDKS). Positions 1084-1104 (ASGSMGRMSASSSTSSAGGQM) are enriched in low complexity. Basic residues predominate over residues 1108–1118 (SKKRSKLCALL). At Cys-1115 the chain carries Cysteine methyl ester. A lipid anchor (S-farnesyl cysteine) is attached at Cys-1115. The propeptide at 1116-1118 (ALL) is removed in mature form.

This sequence belongs to the cyclic nucleotide phosphodiesterase family. In terms of assembly, interacts with PrBP. It depends on a divalent metal cation as a cofactor. As to expression, expressed in Malpighian tubule principal cells. Also expressed in adult head.

The protein localises to the cell membrane. It carries out the reaction 3',5'-cyclic GMP + H2O = GMP + H(+). Its activity is regulated as follows. Inhibited by sildenafil and zaprinast. In terms of biological role, hydrolyzes the second messenger cGMP, which is a key regulator of many important physiological processes. Has cAMP phosphodiesterase activity in vitro but not in vivo. Has a role regulating cGMP transport in Malpighian tubule principal cells. This Drosophila melanogaster (Fruit fly) protein is cGMP-specific 3',5'-cyclic phosphodiesterase (Pde6).